Consider the following 969-residue polypeptide: Leucine--tRNA ligase (969 aa).

Residues 45–55 (PYTNAPLHIGH) carry the 'HIGH' region motif. Positions 649–653 (KMSKS) match the 'KMSKS' region motif. Position 652 (Lys-652) interacts with ATP.

It belongs to the class-I aminoacyl-tRNA synthetase family.

Its subcellular location is the cytoplasm. The enzyme catalyses tRNA(Leu) + L-leucine + ATP = L-leucyl-tRNA(Leu) + AMP + diphosphate. The protein is Leucine--tRNA ligase of Staphylothermus marinus (strain ATCC 43588 / DSM 3639 / JCM 9404 / F1).